The primary structure comprises 725 residues: Ribosomal RNA large subunit methyltransferase K/L (725 aa).

Positions valine 46–leucine 157 constitute a THUMP domain.

The protein belongs to the methyltransferase superfamily. RlmKL family.

It localises to the cytoplasm. The catalysed reaction is guanosine(2445) in 23S rRNA + S-adenosyl-L-methionine = N(2)-methylguanosine(2445) in 23S rRNA + S-adenosyl-L-homocysteine + H(+). It catalyses the reaction guanosine(2069) in 23S rRNA + S-adenosyl-L-methionine = N(2)-methylguanosine(2069) in 23S rRNA + S-adenosyl-L-homocysteine + H(+). In terms of biological role, specifically methylates the guanine in position 2445 (m2G2445) and the guanine in position 2069 (m7G2069) of 23S rRNA. In Pseudomonas aeruginosa (strain ATCC 15692 / DSM 22644 / CIP 104116 / JCM 14847 / LMG 12228 / 1C / PRS 101 / PAO1), this protein is Ribosomal RNA large subunit methyltransferase K/L.